Reading from the N-terminus, the 156-residue chain is Small ribosomal subunit protein uS7 (156 aa).

This sequence belongs to the universal ribosomal protein uS7 family. As to quaternary structure, part of the 30S ribosomal subunit. Contacts proteins S9 and S11.

One of the primary rRNA binding proteins, it binds directly to 16S rRNA where it nucleates assembly of the head domain of the 30S subunit. Is located at the subunit interface close to the decoding center, probably blocks exit of the E-site tRNA. This Rhodococcus opacus (strain B4) protein is Small ribosomal subunit protein uS7.